The chain runs to 397 residues: Tryptophan synthase beta chain (397 aa).

The residue at position 91 (Lys-91) is an N6-(pyridoxal phosphate)lysine.

The protein belongs to the TrpB family. In terms of assembly, tetramer of two alpha and two beta chains. It depends on pyridoxal 5'-phosphate as a cofactor.

It catalyses the reaction (1S,2R)-1-C-(indol-3-yl)glycerol 3-phosphate + L-serine = D-glyceraldehyde 3-phosphate + L-tryptophan + H2O. It functions in the pathway amino-acid biosynthesis; L-tryptophan biosynthesis; L-tryptophan from chorismate: step 5/5. The beta subunit is responsible for the synthesis of L-tryptophan from indole and L-serine. The protein is Tryptophan synthase beta chain of Bacillus cereus (strain AH187).